The following is a 29-amino-acid chain: Cytochrome b6-f complex subunit 8 (29 aa).

A helical transmembrane segment spans residues 3–23 (IITFGWVAVAAFFALSIAFVV).

The protein belongs to the PetN family. The 4 large subunits of the cytochrome b6-f complex are cytochrome b6, subunit IV (17 kDa polypeptide, PetD), cytochrome f and the Rieske protein, while the 4 small subunits are PetG, PetL, PetM and PetN. The complex functions as a dimer.

It localises to the cellular thylakoid membrane. Its function is as follows. Component of the cytochrome b6-f complex, which mediates electron transfer between photosystem II (PSII) and photosystem I (PSI), cyclic electron flow around PSI, and state transitions. The chain is Cytochrome b6-f complex subunit 8 from Synechococcus sp. (strain JA-3-3Ab) (Cyanobacteria bacterium Yellowstone A-Prime).